Reading from the N-terminus, the 925-residue chain is Coronin-7 (925 aa).

4 WD repeats span residues 75 to 115 (CHSD…QALP), 124 to 163 (PEDLPVEVLQFHPTSDGILVSAAGTTVKVWDAAKQQPLTE), 166 to 205 (AHGDLVQSAVWSRDGALVGTACKDKQLRIFDPRTKPQASQ), and 209 to 253 (AHEN…SALA). Disordered regions lie at residues 196–216 (DPRTKPQASQSTQAHENSRDS) and 399–465 (LVPP…SLQS). A compositionally biased stretch (polar residues) spans 201–210 (PQASQSTQAH). Residues 429–460 (SSPPSSLTSPSTPSSLGPTLSSTSGIGTGPSL) show a composition bias toward low complexity. 2 positions are modified to phosphoserine: Ser-462 and Ser-465. Lys-472 participates in a covalent cross-link: Glycyl lysine isopeptide (Lys-Gly) (interchain with G-Cter in ubiquitin). WD repeat units follow at residues 542–582 (QNGA…LEEV), 592–632 (GHME…DRLK), and 635–674 (GHQDQIFSLAWSPDGQQLATVCKDGRVRVYRPRSGPEPLQ). Lys-680 participates in a covalent cross-link: Glycyl lysine isopeptide (Lys-Gly) (interchain with G-Cter in ubiquitin). The stretch at 728-768 (DVAPSTLVPSYEPRHWPGAPDWQGDARVFLYELLPESPFFM) is one WD 8 repeat. Positions 857 to 925 (LQPPDMSPVS…FEGVDEDEWD (69 aa)) are disordered. A compositionally biased stretch (low complexity) spans 866–882 (SQAPREAPARRAPSSAQ). The segment covering 884-896 (LEEKSDQQKKEEL) has biased composition (basic and acidic residues). Ser-915 is modified (phosphoserine).

The protein belongs to the WD repeat coronin family. In terms of assembly, interacts with clathrin adapter AP1 complex. This interaction takes place at Golgi membranes and not AP1-positive endosomal membranes. Interacts (when ubiquitinated at Lys-472) with EPS15. In terms of processing, the membrane-associated form is phosphorylated on tyrosine residues. Ubiquitinated via 'Lys-33'-linked ubiquitin chains by the BCR(KLHL20) E3 ubiquitin ligase complex: 'Lys-33'-linked ubiquitination promotes interaction with EPS15 and facilitates actin polymerization at the trans-Golgi network, thereby facilitating post-Golgi trafficking. Deubiquitinated by ZRANB1/TRABID.

The protein localises to the golgi apparatus membrane. The protein resides in the golgi apparatus. Its subcellular location is the trans-Golgi network. It localises to the cytoplasmic vesicle. It is found in the cytoplasm. The protein localises to the cytosol. Its function is as follows. F-actin regulator involved in anterograde Golgi to endosome transport: upon ubiquitination via 'Lys-33'-linked ubiquitin chains by the BCR(KLHL20) E3 ubiquitin ligase complex, interacts with EPS15 and localizes to the trans-Golgi network, where it promotes actin polymerization, thereby facilitating post-Golgi trafficking. May play a role in the maintenance of the Golgi apparatus morphology. The protein is Coronin-7 (CORO7) of Pongo abelii (Sumatran orangutan).